A 180-amino-acid chain; its full sequence is UPF0397 protein SSA_0592 (180 aa).

The next 5 helical transmembrane spans lie at 9–29 (VVAT…NIPT), 45–65 (LFSV…GHAI), 72–92 (GGLW…VGFF), 113–133 (LIQF…DVIV), and 146–166 (IVAI…LLTA).

It belongs to the UPF0397 family.

It localises to the cell membrane. The polypeptide is UPF0397 protein SSA_0592 (Streptococcus sanguinis (strain SK36)).